A 38-amino-acid chain; its full sequence is MTGPNPNKQAVELNRTSLYWGLLLIFVLAVLFSSYFFN.

A helical transmembrane segment spans residues 17–37 (SLYWGLLLIFVLAVLFSSYFF).

It belongs to the PsbL family. In terms of assembly, PSII is composed of 1 copy each of membrane proteins PsbA, PsbB, PsbC, PsbD, PsbE, PsbF, PsbH, PsbI, PsbJ, PsbK, PsbL, PsbM, PsbT, PsbX, PsbY, PsbZ, Psb30/Ycf12, at least 3 peripheral proteins of the oxygen-evolving complex and a large number of cofactors. It forms dimeric complexes.

It is found in the plastid. Its subcellular location is the chloroplast thylakoid membrane. One of the components of the core complex of photosystem II (PSII). PSII is a light-driven water:plastoquinone oxidoreductase that uses light energy to abstract electrons from H(2)O, generating O(2) and a proton gradient subsequently used for ATP formation. It consists of a core antenna complex that captures photons, and an electron transfer chain that converts photonic excitation into a charge separation. This subunit is found at the monomer-monomer interface and is required for correct PSII assembly and/or dimerization. This chain is Photosystem II reaction center protein L, found in Thalassiosira pseudonana (Marine diatom).